We begin with the raw amino-acid sequence, 121 residues long: Large ribosomal subunit protein uL14 (121 aa).

Belongs to the universal ribosomal protein uL14 family. In terms of assembly, part of the 50S ribosomal subunit. Forms a cluster with proteins L3 and L19. In the 70S ribosome, L14 and L19 interact and together make contacts with the 16S rRNA in bridges B5 and B8.

Its function is as follows. Binds to 23S rRNA. Forms part of two intersubunit bridges in the 70S ribosome. In Prochlorococcus marinus (strain MIT 9313), this protein is Large ribosomal subunit protein uL14.